The sequence spans 580 residues: 2-isopropylmalate synthase (580 aa).

A compositionally biased stretch (polar residues) spans 1–11; that stretch reads MSATAFPTLST. The interval 1-37 is disordered; it reads MSATAFPTLSTPAGEIPATAPAWNRQRRSQMPSHRYR. In terms of domain architecture, Pyruvate carboxyltransferase spans 61–334; the sequence is PLWVPVDLRD…DPMIDFSDID (274 aa). Mg(2+)-binding residues include aspartate 70, histidine 273, histidine 275, and asparagine 309. The tract at residues 476 to 580 is regulatory domain; that stretch reads EGEADAPQAD…ARAVAEVRPG (105 aa).

Belongs to the alpha-IPM synthase/homocitrate synthase family. LeuA type 2 subfamily. In terms of assembly, homodimer. Requires Mg(2+) as cofactor.

The protein resides in the cytoplasm. It carries out the reaction 3-methyl-2-oxobutanoate + acetyl-CoA + H2O = (2S)-2-isopropylmalate + CoA + H(+). It functions in the pathway amino-acid biosynthesis; L-leucine biosynthesis; L-leucine from 3-methyl-2-oxobutanoate: step 1/4. Its function is as follows. Catalyzes the condensation of the acetyl group of acetyl-CoA with 3-methyl-2-oxobutanoate (2-ketoisovalerate) to form 3-carboxy-3-hydroxy-4-methylpentanoate (2-isopropylmalate). The protein is 2-isopropylmalate synthase of Nocardia farcinica (strain IFM 10152).